A 1244-amino-acid chain; its full sequence is Membrane-associated phosphatidylinositol transfer protein 1 (1244 aa).

A Phosphothreonine modification is found at T59. Disordered stretches follow at residues 258–331 and 339–358; these read KCNT…QSLS and ARDSENSSEEEFFDAHEGFS. A Phosphothreonine; by CDK1 modification is found at T287. The segment covering 299-319 has biased composition (low complexity); that stretch reads ASPDASFGKQWSSSSRSSYSS. Phosphoserine occurs at positions 300, 304, 319, 326, 329, 342, 345, 346, and 373. S382 carries the post-translational modification Phosphoserine; by CDK1. Residues 581–682 are disordered; that stretch reads AGTGSRGSSR…SSEAPDGPSS (102 aa). Residues S593, S600, and S621 each carry the phosphoserine modification. Over residues 643 to 658 the composition is skewed to polar residues; sequence GSQNSLQAAPATTSSW. The DDHD domain maps to 686 to 880; the sequence is LDFKVSGFFL…VAFILRQVIE (195 aa). S896 carries the phosphoserine modification. Residues 1206–1244 form a disordered region; it reads QLLRSRGPSQAEREGPGTPPTTLARGKARSISLKLDSEE. R1211 and R1218 each carry omega-N-methylarginine. The residue at position 1237 (S1237) is a Phosphoserine.

The protein belongs to the PtdIns transfer protein family. PI transfer class IIA subfamily. In terms of assembly, interacts with PIK4CA. Interacts with PTK2B via its C-terminus. Interacts with RHOA. Has higher affinity for the inactive, GDP-bound form of RHOA. The CDK1-phosphorylated form interacts with PLK1. Interacts with VAPB. Post-translationally, phosphorylated on multiple sites by CDK1 at the onset of mitosis. Phosphorylation facilitates dissociation from the Golgi complex and is required for interaction with PLK1. Phosphorylated on threonine residues upon treatment with oleic acid. In terms of processing, phosphorylated on tyrosine residues by PTK2B. Ubiquitous.

It localises to the cytoplasm. The protein localises to the golgi apparatus. It is found in the golgi stack membrane. Its subcellular location is the endoplasmic reticulum membrane. The protein resides in the lipid droplet. It localises to the cleavage furrow. The protein localises to the midbody. It carries out the reaction a 1,2-diacyl-sn-glycero-3-phospho-(1D-myo-inositol)(in) = a 1,2-diacyl-sn-glycero-3-phospho-(1D-myo-inositol)(out). In terms of biological role, catalyzes the transfer of phosphatidylinositol (PI) between membranes. Binds PI, phosphatidylcholine (PC) and phosphatidic acid (PA) with the binding affinity order of PI &gt; PA &gt; PC. Regulates RHOA activity, and plays a role in cytoskeleton remodeling. Necessary for normal completion of cytokinesis. Plays a role in maintaining normal diacylglycerol levels in the Golgi apparatus. Necessary for maintaining the normal structure of the endoplasmic reticulum and the Golgi apparatus. Required for protein export from the endoplasmic reticulum and the Golgi. Binds calcium ions. The protein is Membrane-associated phosphatidylinositol transfer protein 1 (PITPNM1) of Homo sapiens (Human).